A 475-amino-acid polypeptide reads, in one-letter code: Probable sensor histidine kinase TcrY (475 aa).

Over 1–153 (MGITAATEMA…NVDATMLQML (153 aa)) the chain is Extracellular. A helical transmembrane segment spans residues 154–174 (IIFGIVTVIALVAATTAGIVI). The Cytoplasmic portion of the chain corresponds to 175–475 (IKRALAPLRR…GWQPLESSPR (301 aa)). The region spanning 176–238 (KRALAPLRRV…MLDHIAAALS (63 aa)) is the HAMP domain. The Histidine kinase domain occupies 253-466 (DASHELRTPL…EFAVRLPLDG (214 aa)). His256 is modified (phosphohistidine; by autocatalysis).

Homodimer. A divalent metal cation is required as a cofactor. Post-translationally, autophosphorylated.

The protein resides in the cell membrane. It catalyses the reaction ATP + protein L-histidine = ADP + protein N-phospho-L-histidine.. Member of the two-component regulatory system TcrY/TcrX. Activates TcrX by phosphorylation. This chain is Probable sensor histidine kinase TcrY (tcrY), found in Mycobacterium tuberculosis (strain ATCC 25618 / H37Rv).